The following is a 188-amino-acid chain: Inosine triphosphate pyrophosphatase (188 aa).

Residue 12 to 17 (TGNANK) coordinates ITP. Residue glutamate 40 participates in Mg(2+) binding. Residues lysine 52, 68–69 (DT), lysine 85, 144–147 (FGWD), lysine 165, and 170–171 (HR) each bind ITP.

This sequence belongs to the HAM1 NTPase family. Homodimer. Mg(2+) serves as cofactor. Requires Mn(2+) as cofactor.

The protein resides in the cytoplasm. It localises to the nucleus. The catalysed reaction is ITP + H2O = IMP + diphosphate + H(+). It catalyses the reaction dITP + H2O = dIMP + diphosphate + H(+). The enzyme catalyses XTP + H2O = XMP + diphosphate + H(+). Pyrophosphatase that hydrolyzes non-canonical purine nucleotides such as inosine triphosphate (ITP), deoxyinosine triphosphate (dITP) or xanthosine 5'-triphosphate (XTP) to their respective monophosphate derivatives. The enzyme does not distinguish between the deoxy- and ribose forms. Probably excludes non-canonical purines from RNA and DNA precursor pools, thus preventing their incorporation into RNA and DNA and avoiding chromosomal lesions. The polypeptide is Inosine triphosphate pyrophosphatase (Podospora anserina (strain S / ATCC MYA-4624 / DSM 980 / FGSC 10383) (Pleurage anserina)).